Reading from the N-terminus, the 1620-residue chain is Myb-like protein X (1620 aa).

Residues 1–13 (MSTIGNNASSIGN) show a composition bias toward polar residues. Disordered stretches follow at residues 1–57 (MSTI…TTTT), 176–204 (TGSGGIGGGGSGSSTPNRGRFSGKTSNIG), 294–318 (FFQDDNENGNGNGNGSGSGSNNMTE), and 450–849 (KEEK…TKSA). Residues 28-57 (PPTTTTTTTTTTTTTTTTPTTTTPTTTTTT) show a composition bias toward low complexity. Residues 177 to 187 (GSGGIGGGGSG) are compositionally biased toward gly residues. Residues 310–421 (GSGSNNMTEI…CFVNSGDYMN (112 aa)) enclose the SWIRM domain. Positions 450 to 497 (KEEKERLEREEKERLEREEKQEKEEKERLEKEEKERLEREEKQEKEEK) are enriched in basic and acidic residues. Over residues 498–511 (EEKEEKEENEEKEE) the composition is skewed to acidic residues. Basic and acidic residues predominate over residues 512–568 (KEEKEKEEKEEKEKQEKEDDKEKQENENEQEKIEKKENKNDSQNKEIKENHDKKDET). Positions 570–598 (DSNNTTTTTTTTTTTSTNTLVAESSSSSS) are enriched in low complexity. Basic and acidic residues predominate over residues 606–628 (KEMKEQPVQENKDKEMMETDTTK). The segment covering 629–645 (ENNGVETTETTNQTTDS) has biased composition (low complexity). A compositionally biased stretch (basic and acidic residues) spans 647-798 (ETDKEMKDQP…EIKKDKLKEN (152 aa)). The segment covering 799-834 (EEVEGEIEGENDEGEVVEEDEDEEMEIEEDEEDEED) has biased composition (acidic residues). The region spanning 925 to 977 (PEEFGWTDIETLLLLEGIEIFRDNWQEISDYIGGSKTPEQCLTHFIRLPIEDE) is the SANT domain. The disordered stretch occupies residues 1049–1506 (QPSKEELERI…DDDEDVEMET (458 aa)). 3 stretches are compositionally biased toward basic and acidic residues: residues 1051-1195 (SKEE…DKSD), 1219-1255 (ETVEMNQDDHVKIDEKETKENDKKSITEEENQQKDDN), and 1264-1302 (HNKEIEKDDNKENENEKEKENENKNEKQIENENEKEKDL). The span at 1303–1325 (NNLSESQSSNDQSKSNEQMSSDN) shows a compositional bias: low complexity. Polar residues predominate over residues 1338–1350 (TQITSKEQNITTD). 2 stretches are compositionally biased toward low complexity: residues 1358–1382 (TPTTTTPATLPATPISESNTTTTNT) and 1390–1416 (NETNKTNENNSNNNNTNEENKTAESNN). Composition is skewed to acidic residues over residues 1467 to 1481 (EENEMEEVEEEENDL) and 1493 to 1504 (VGEEDDDEDVEM).

It localises to the nucleus. This is Myb-like protein X (mybX) from Dictyostelium discoideum (Social amoeba).